Reading from the N-terminus, the 617-residue chain is Pentatricopeptide repeat-containing protein At4g18520, chloroplastic (617 aa).

Residues 1 to 19 constitute a chloroplast transit peptide; it reads MFSLSLIQPRLRISEIPVT. 14 PPR repeats span residues 116-146, 147-181, 183-217, 222-247, 248-282, 283-317, 318-348, 349-383, 384-418, 419-449, 450-484, 485-519, 520-550, and 551-585; these read VIYFGNNLISSCVRLGDLVYARKVFDSMPEK, NTVTWTAMIDGYLKYGLEDEAFALFEDYVKHGIRF, NERMFVCLLNLCSRRAEFELGRQVHGNMVKVGVGN, SSLVYFYAQCGELTSALRAFDMMEEK, DVISWTAVISACSRKGHGIKAIGMFIGMLNHWFLP, NEFTVCSILKACSEEKALRFGRQVHSLVVKRMIKT, DVFVGTSLMDMYAKCGEISDCRKVFDGMSNR, NTVTWTSIIAAHAREGFGEEAISLFRIMKRRHLIA, NNLTVVSILRACGSVGALLLGKELHAQIIKNSIEK, NVYIGSTLVWLYCKCGESRDAFNVLQQLPSR, DVVSWTAMISGCSSLGHESEALDFLKEMIQEGVEP, NPFTYSSALKACANSESLLIGRSIHSIAKKNHALS, NVFVGSALIHMYAKCGFVSEAFRVFDSMPEK, and NLVSWKAMIMGYARNGFCREALKLMYRMEAEGFEV.

This sequence belongs to the PPR family. PCMP-A subfamily. In terms of assembly, interacts with MORF8/RIP1, MORF2/RIP2 and MORF9/RIP9. In terms of tissue distribution, expressed specifically in aerial greening tissues, such as cotyledons, rosette leaves, cauline leaves, stems, sepals, stamens, carpels and siliques.

It is found in the plastid. Its subcellular location is the chloroplast. Functionally, required for proper chloroplast development. Involved in the regulation of plastid gene expression probably through regulation of plastid-encoded polymerase (PEP) dependent chloroplast transcription. Required for RNA editing of several chloroplastic transcripts, especially accD transcripts. Required for processing of the chloroplastic rpoA pre-mRNA. Required for the monocistronic rpoA transcript processing from the rpl23-rpl2-rps19-rpl22-rps3-rpl16-rpl14-rps8-rpl36-rps11-rpoA polycistron. Binds the intergenic sequence of rps11-rpoA for rpoA monocistronic RNA cleavage. In Arabidopsis thaliana (Mouse-ear cress), this protein is Pentatricopeptide repeat-containing protein At4g18520, chloroplastic (PCMP-A2).